An 84-amino-acid polypeptide reads, in one-letter code: U4-theraphotoxin-Hhn1n (84 aa).

The signal sequence occupies residues 1-22 (MKVTLIAILTCAAVLVLHTTAA). Residues 23–47 (EELEESQLMEVGMPDTELAAVDEER) constitute a propeptide that is removed on maturation. 3 cysteine pairs are disulfide-bonded: Cys-51-Cys-65, Cys-55-Cys-76, and Cys-70-Cys-81.

This sequence belongs to the neurotoxin 12 (Hwtx-2) family. 02 (Hwtx-2) subfamily. In terms of tissue distribution, expressed by the venom gland.

It localises to the secreted. Postsynaptic neurotoxin. The polypeptide is U4-theraphotoxin-Hhn1n (Cyriopagopus hainanus (Chinese bird spider)).